The sequence spans 619 residues: Lysophospholipid acyltransferase (619 aa).

Residues 1-19 are Lumenal-facing; sequence MYNPVDAVLTKIITNYGID. The chain crosses the membrane as a helical span at residues 20 to 39; the sequence is SFTLRYAICLLGSFPLNAIL. Topologically, residues 40–51 are cytoplasmic; sequence KRIPEKRIGLKC. A helical membrane pass occupies residues 52 to 72; sequence CFIISMSMFYLFGVLNLVSGF. Over 73 to 92 the chain is Lumenal; that stretch reads RTLFISTMFTYLISRFYRSK. A helical membrane pass occupies residues 93–113; sequence FMPHLNFMFVMGHLAINHIHA. At 114-231 the chain is on the cytoplasmic side; it reads QFLNEQTQTT…GERRQIPKNG (118 aa). The active-site Nucleophile is Asp-146. The helical transmembrane segment at 232–252 threads the bilayer; that stretch reads KLALWKVVQGLAWMILSTLGM. Residues 253-274 are Lumenal-facing; it reads KHFPVKYVLDKDGFPTRSFIFR. The helical transmembrane segment at 275 to 295 threads the bilayer; it reads IHYLFLLGFIHRFKYYAAWTI. Over 296-429 the chain is Cytoplasmic; that stretch reads SEGSCILCGL…TPLPSKKIYD (134 aa). Residue Glu-297 is the Nucleophile of the active site. His-382 is a catalytic residue. A helical membrane pass occupies residues 430 to 450; that stretch reads LVGIYAIKLAFGYMVQPFIIL. At 451-456 the chain is on the lumenal side; that stretch reads DLKPSL. Residues 457 to 477 form a helical membrane-spanning segment; sequence MVWGSVYFYVHIIVAFSFFLF. Residues 478 to 619 lie on the Cytoplasmic side of the membrane; the sequence is RGPYAKQVTE…SPKPISKKEE (142 aa). A Phosphoserine modification is found at Ser-513. The stretch at 545-593 forms a coiled coil; the sequence is ELEKWDNAKEDWEDFCKDYKEWRNKNGLEIEEENLSKAFERFKQEFSNA. The disordered stretch occupies residues 592-619; that stretch reads NAASGSGERVRKMSFSGYSPKPISKKEE. Ser-605, Ser-610, and Ser-615 each carry phosphoserine.

The protein belongs to the membrane-bound acyltransferase family.

The protein localises to the endoplasmic reticulum membrane. It catalyses the reaction a 1-acyl-sn-glycero-3-phosphate + an acyl-CoA = a 1,2-diacyl-sn-glycero-3-phosphate + CoA. The catalysed reaction is a 1-acyl-sn-glycero-3-phosphocholine + an acyl-CoA = a 1,2-diacyl-sn-glycero-3-phosphocholine + CoA. It carries out the reaction 1-acyl-sn-glycero-3-phospho-(1'-sn-glycerol) + an acyl-CoA = a 1,2-diacyl-sn-glycero-3-phospho-(1'-sn-glycerol) + CoA. The enzyme catalyses a 1-acyl-sn-glycero-3-phospho-(1D-myo-inositol) + an acyl-CoA = a 1,2-diacyl-sn-glycero-3-phospho-(1D-myo-inositol) + CoA. It catalyses the reaction a 1-acyl-sn-glycero-3-phospho-L-serine + an acyl-CoA = a 1,2-diacyl-sn-glycero-3-phospho-L-serine + CoA. The catalysed reaction is a 1-acyl-sn-glycero-3-phosphoethanolamine + an acyl-CoA = a 1,2-diacyl-sn-glycero-3-phosphoethanolamine + CoA. It carries out the reaction 1-(9Z-octadecenoyl)-sn-glycero-3-phosphoethanolamine + (9Z)-octadecenoyl-CoA = 1,2-di-(9Z-octadecenoyl)-sn-glycero-3-phosphoethanolamine + CoA. The enzyme catalyses 1-(9Z-octadecenoyl)-sn-glycero-3-phosphoethanolamine + (9Z)-hexadecenoyl-CoA = 1-(9Z)-octadecenoyl-2-(9Z)-hexadecenoyl-sn-glycero-3-phosphoethanolamine + CoA. It catalyses the reaction 1-(9Z-octadecenoyl)-sn-glycero-3-phosphoethanolamine + hexadecanoyl-CoA = 1-(9Z-octadecenoyl)-2-hexadecanoyl-sn-glycero-3-phosphoethanolamine + CoA. The catalysed reaction is 1-(9Z-octadecenoyl)-sn-glycero-3-phosphoethanolamine + tetradecanoyl-CoA = 1-(9Z)-octadecenoyl-2-tetradecanoyl-sn-glycero-3-phosphoethanolamine + CoA. It carries out the reaction 1-(9Z-octadecenoyl)-sn-glycero-3-phosphate + (9Z)-octadecenoyl-CoA = 1,2-di-(9Z-octadecenoyl)-sn-glycero-3-phosphate + CoA. The enzyme catalyses (9Z)-hexadecenoyl-CoA + 1-hexadecanoyl-sn-glycero-3-phosphocholine = 1-hexadecanoyl-2-(9Z-hexadecenoyl)-sn-glycero-3-phosphocholine + CoA. It catalyses the reaction 1-hexadecanoyl-sn-glycero-3-phosphocholine + (9Z)-octadecenoyl-CoA = 1-hexadecanoyl-2-(9Z-octadecenoyl)-sn-glycero-3-phosphocholine + CoA. The catalysed reaction is 1-tetradecanoyl-sn-glycero-3-phosphoethanolamine + (9Z)-octadecenoyl-CoA = 1-tetradecanoyl-2-(9Z-octadecenoyl)-sn-glycero-3-phosphoethanolamine + CoA. It carries out the reaction 1-(9Z-octadecenoyl)-sn-glycero-3-phospho-L-serine + (9Z)-octadecenoyl-CoA = 1,2-di-(9Z)-octadecenoyl-sn-glycero-3-phospho-L-serine + CoA. The enzyme catalyses a 1-acyl-sn-glycero-3-phospho-(1D-myo-inositol) + (9Z)-octadecenoyl-CoA = a 1-acyl-2-(9Z-octadecenoyl)-sn-glycero-3-phospho-(1D-myo-inositol) + CoA. Its pathway is lipid metabolism; phospholipid metabolism. In terms of biological role, broad specificity membrane-bound O-acyltransferase that mediates the incorporation of unsaturated acyl chains into the sn-2 position of various lysophospholipids. Preferentially acylates lysophosphocholine (LPC), but also lysophosphoethanolamine (LPE), lysophosphatidylglycerol (LPG), lysophosphatidic acid (LPA), lysophosphoethanolamine (LPE), lysophosphoinositol (LPI), and lysophosphoserine (LPS). Prefers an acyl residue to an alkyl residue at the sn-1 position of lysophospholipid acceptors. Accepts acyl chains in acyl-CoA from C-2 to C-20, and shows strong preference for unsaturated acyl-CoAs with 16-20 carbons. Together with SLC1, plays a central role in phosphatidic acid (PA) biosynthesis. PA is the intermediate, from which all glycerophospholipids are synthesized. Can also introduce an acyl chain at the sn-1 position of the lysophosphatidylcholine analog 1-hydroxy-2-hexadecyl-sn-glycero-3-phosphocholine (HHPC). This Saccharomyces cerevisiae (strain ATCC 204508 / S288c) (Baker's yeast) protein is Lysophospholipid acyltransferase.